The chain runs to 266 residues: MVCLCFLGGSWMTALMLILMVLNPPFAWARDTPPHFLEVAKSECYFTNGTERVRFVERYIHNREEFVRFDSDVGEFRAVTELGRPVAESWNGQKEILEQERATVDTYCRHNYGVIESFTVQRRVEPTVTVYPTKTQTLQHHNLLVCSVNGFYPGHIEVRWLRNGQEEEAGVVSTGLIRNGDWTFQILVMLEIVPQSGEVYTCQVEHPSLTSPVTVEWRAQSDSAQSKMLSGIGGFVLGLLFLAVGLFIYFRNQKGHSGLQPTGLLS.

The N-terminal stretch at 1–29 is a signal peptide; the sequence is MVCLCFLGGSWMTALMLILMVLNPPFAWA. A beta-1 region spans residues 30–124; the sequence is RDTPPHFLEV…IESFTVQRRV (95 aa). Over 30–227 the chain is Extracellular; sequence RDTPPHFLEV…RAQSDSAQSK (198 aa). 2 disulfide bridges follow: Cys44/Cys108 and Cys146/Cys202. N-linked (GlcNAc...) asparagine glycosylation occurs at Asn48. The beta-2 stretch occupies residues 125–227; sequence EPTVTVYPTK…RAQSDSAQSK (103 aa). The region spanning 126–214 is the Ig-like C1-type domain; it reads PTVTVYPTKT…EHPSLTSPVT (89 aa). The chain crosses the membrane as a helical span at residues 228-250; the sequence is MLSGIGGFVLGLLFLAVGLFIYF. Topologically, residues 251-266 are cytoplasmic; it reads RNQKGHSGLQPTGLLS.

It belongs to the MHC class II family.

It is found in the membrane. This chain is DLA class II histocompatibility antigen, DR-1 beta chain, found in Canis lupus familiaris (Dog).